We begin with the raw amino-acid sequence, 701 residues long: A-type ATP synthase subunit I (701 aa).

The next 10 membrane-spanning stretches (helical) occupy residues 340–360 (WEIS…GLMF), 363–379 (FGNA…FYRY), 388–408 (IPKL…TGLL), 435–455 (LYNL…LLPF), 468–488 (MIFS…LGVI), 498–518 (FLFL…FIFM), 555–575 (GIVW…AILV), 583–603 (WGSA…LLLL), 612–632 (VLVF…MAYL), and 649–669 (IIIL…VVFI).

Belongs to the V-ATPase 116 kDa subunit family. Has multiple subunits with at least A(3), B(3), C, D, E, F, H, I and proteolipid K(x).

It localises to the cell membrane. In terms of biological role, component of the A-type ATP synthase that produces ATP from ADP in the presence of a proton gradient across the membrane. The sequence is that of A-type ATP synthase subunit I from Saccharolobus solfataricus (strain ATCC 35092 / DSM 1617 / JCM 11322 / P2) (Sulfolobus solfataricus).